We begin with the raw amino-acid sequence, 108 residues long: Large ribosomal subunit protein eL33A (108 aa).

The protein belongs to the eukaryotic ribosomal protein eL33 family. Component of the large ribosomal subunit (LSU). Mature yeast ribosomes consist of a small (40S) and a large (60S) subunit. The 40S small subunit contains 1 molecule of ribosomal RNA (18S rRNA) and at least 33 different proteins. The large 60S subunit contains 3 rRNA molecules (25S, 5.8S and 5S rRNA) and at least 46 different proteins.

The protein resides in the cytoplasm. It is found in the nucleus. Its subcellular location is the nucleolus. Component of the ribosome, a large ribonucleoprotein complex responsible for the synthesis of proteins in the cell. The small ribosomal subunit (SSU) binds messenger RNAs (mRNAs) and translates the encoded message by selecting cognate aminoacyl-transfer RNA (tRNA) molecules. The large subunit (LSU) contains the ribosomal catalytic site termed the peptidyl transferase center (PTC), which catalyzes the formation of peptide bonds, thereby polymerizing the amino acids delivered by tRNAs into a polypeptide chain. The nascent polypeptides leave the ribosome through a tunnel in the LSU and interact with protein factors that function in enzymatic processing, targeting, and the membrane insertion of nascent chains at the exit of the ribosomal tunnel. The sequence is that of Large ribosomal subunit protein eL33A (rpl35b) from Schizosaccharomyces pombe (strain 972 / ATCC 24843) (Fission yeast).